The chain runs to 627 residues: (-)-alpha-terpineol synthase, chloroplastic (627 aa).

The transit peptide at 1–52 (MDLISVLPSASKSCVCLHKPLSSSTHKLKPFCKTIRILVMPRRWEFARPSMS) directs the protein to the chloroplast. Positions 378, 382, and 530 each coordinate Mg(2+). The DDXXD motif signature appears at 378–382 (DDMYD).

The protein belongs to the terpene synthase family. Tpsd subfamily. Requires Mg(2+) as cofactor. The cofactor is Mn(2+).

It is found in the plastid. The protein resides in the chloroplast. The enzyme catalyses (2E)-geranyl diphosphate + H2O = (S)-alpha-terpineol + diphosphate. It functions in the pathway terpene metabolism; oleoresin biosynthesis. Involved in defensive oleoresin formation in conifers in response to insect attack or other injury. Involved in monoterpene (C10) olefins biosynthesis. Produces 57.3% alpha-terpineol (15.1% (+)/84.9% (-)), 27.6% limonene (25.2% (+)/74.8% (-)), 8% terpinolene, 4.7% beta-pinene (14.8% (+)/85.2% (-)), 1.3% alpha-pinene (100% (+)) and 1.1% myrcene. This is (-)-alpha-terpineol synthase, chloroplastic (PT10) from Pinus taeda (Loblolly pine).